The following is an 825-amino-acid chain: Phenylalanine--tRNA ligase beta subunit (825 aa).

Residues 39 to 154 (RSWAEGVVLG…KAHPLGSDAR (116 aa)) form the tRNA-binding domain. Residues 411 to 506 (PLERTLKLRL…RLYGYDRFSE (96 aa)) enclose the B5 domain. Mg(2+) contacts are provided by Asp484, Asp490, Glu493, and Glu494. An FDX-ACB domain is found at 731-824 (SPFPASDRDI…LEKHFPVTLR (94 aa)).

It belongs to the phenylalanyl-tRNA synthetase beta subunit family. Type 1 subfamily. As to quaternary structure, tetramer of two alpha and two beta subunits. Requires Mg(2+) as cofactor.

The protein localises to the cytoplasm. The enzyme catalyses tRNA(Phe) + L-phenylalanine + ATP = L-phenylalanyl-tRNA(Phe) + AMP + diphosphate + H(+). This Synechococcus sp. (strain JA-3-3Ab) (Cyanobacteria bacterium Yellowstone A-Prime) protein is Phenylalanine--tRNA ligase beta subunit.